A 466-amino-acid polypeptide reads, in one-letter code: Voltage-gated potassium channel regulatory subunit KCNG2 (466 aa).

At 1–174 the chain is on the cytoplasmic side; the sequence is MEPWPCSPGG…DVVDNPHSGL (174 aa). The disordered stretch occupies residues 131–155; that stretch reads AEARAGPTERGAQGSPARALGPRGR. Residues 175–196 form a helical membrane-spanning segment; it reads AGKLFACVSVSFVAVTAVGLCL. Residues 197–217 are Extracellular-facing; it reads STMPDIRAEEERGECSPKCRS. Residues 218–239 form a helical membrane-spanning segment; that stretch reads LFVLETVCVAWFSFEFLLRSLQ. Residues 240–250 lie on the Cytoplasmic side of the membrane; the sequence is AESKCAFLRAP. The chain crosses the membrane as a helical span at residues 251–271; it reads LNIIDILALLPFYVSLLLGLA. The Extracellular segment spans residues 272–283; the sequence is AGPGGTKLLERA. The chain crosses the membrane as a helical; Voltage-sensor span at residues 284-304; the sequence is GLVLRLLRALRVLYVMRLARH. Residues 305 to 319 are Cytoplasmic-facing; the sequence is SLGLRSLGLTMRRCA. The helical transmembrane segment at 320–341 threads the bilayer; sequence REFGLLLLFLCVAMALFAPLVH. The Extracellular portion of the chain corresponds to 342–356; the sequence is LAERELGARRDFSSV. An intramembrane region (helical) is located at residues 357 to 368; sequence PASYWWAVISMT. The Selectivity filter motif lies at 369–374; that stretch reads TVGYGD. An intramembrane segment occupies 369–376; the sequence is TVGYGDMV. The Extracellular portion of the chain corresponds to 377-383; it reads PRSLPGQ. A helical transmembrane segment spans residues 384 to 412; it reads VVALSSILSGILLMAFPVTSIFHTFSRSY. At 413-466 the chain is on the cytoplasmic side; sequence SELKEQQQRAASPEPALQEDSTHSATATEDSSQGPDSAGLADDSADALWVRAGR. The interval 416 to 466 is disordered; it reads KEQQQRAASPEPALQEDSTHSATATEDSSQGPDSAGLADDSADALWVRAGR. Over residues 435–447 the composition is skewed to polar residues; sequence HSATATEDSSQGP. The segment covering 448-460 has biased composition (low complexity); the sequence is DSAGLADDSADAL.

This sequence belongs to the potassium channel family. G (TC 1.A.1.2) subfamily. Kv6.2/KCNG2 sub-subfamily. As to quaternary structure, heterodimer with KCNB1. In terms of tissue distribution, highly expressed in heart, liver, skeletal muscle, kidney and pancreas. Detected at low levels in brain, lung and placenta.

The protein localises to the cell membrane. Its function is as follows. Regulatory alpha-subunit of the voltage-gated potassium (Kv) channel which, when coassembled with KCNB1, can modulate the kinetics and conductance-voltage relationship. Modulates channel activity by shifting the threshold and the half-maximal activation to more negative values. Potassium channel subunit that does not form functional channels by itself. The sequence is that of Voltage-gated potassium channel regulatory subunit KCNG2 from Homo sapiens (Human).